Here is a 243-residue protein sequence, read N- to C-terminus: Large ribosomal subunit protein uL2 (243 aa).

The segment at 202–243 (HGGGRHQHVGQSSTVSRNAPPGAKVGSIAARKTGRAKIKDRR) is disordered. The span at 233-243 (KTGRAKIKDRR) shows a compositional bias: basic residues.

It belongs to the universal ribosomal protein uL2 family. In terms of assembly, part of the 50S ribosomal subunit. Forms a bridge to the 30S subunit in the 70S ribosome.

One of the primary rRNA binding proteins. Required for association of the 30S and 50S subunits to form the 70S ribosome, for tRNA binding and peptide bond formation. It has been suggested to have peptidyltransferase activity; this is somewhat controversial. Makes several contacts with the 16S rRNA in the 70S ribosome. The chain is Large ribosomal subunit protein uL2 from Cenarchaeum symbiosum (strain A).